The primary structure comprises 631 residues: Mu-like prophage FluMu protein gp42 (631 aa).

2 helical membrane-spanning segments follow: residues 56–76 (LGNI…TMVG) and 385–405 (GLAD…PVYV). A disordered region spans residues 425–453 (IEDGRDKDKKTQKKNKPPRPKRGRGSVRS). A compositionally biased stretch (basic residues) spans 434-449 (KTQKKNKPPRPKRGRG). 3 helical membrane-spanning segments follow: residues 455–475 (VAAV…VTTA), 495–515 (SKAV…TVLM), and 543–563 (ALIP…GWLG).

The protein to phage Mu protein gp42.

The protein resides in the cell membrane. This is Mu-like prophage FluMu protein gp42 from Haemophilus influenzae (strain ATCC 51907 / DSM 11121 / KW20 / Rd).